A 613-amino-acid chain; its full sequence is ADP-ribosylation factor-binding protein GGA2 (613 aa).

The 131-residue stretch at 33–163 (ATDPSMSEQD…MLKKQGIIKQ (131 aa)) folds into the VHS domain. The GAT domain maps to 188 to 315 (DEEKSKLLTR…GVLLYKQVME (128 aa)). The tract at residues 316–483 (GRVTFGNRVT…VFVPLESVKP (168 aa)) is unstructured hinge. Disordered regions lie at residues 389-414 (GQNC…NPSA) and 435-466 (SQKS…SPSS). Positions 399 to 414 (PSSSTLPGGGVQNPSA) are enriched in polar residues. S400 carries the post-translational modification Phosphoserine. The GAE domain maps to 484–605 (SSLPPLIVYD…SEVGEVKDFP (122 aa)).

This sequence belongs to the GGA protein family. In terms of assembly, monomer. Interacts with NECAP1, TSG101, UBC and AFTPH/aftiphilin. Interacts with CNST. Interacts with GGA1 and GGA3. Binds to clathrin and activated ARFs, such as ARF1, ARF5 and ARF6. Binds RABEP1 and RABGEF1. Interacts with the type-I membrane proteins LRP3, M6PR/CD-MPR, IGF2R/CI-MPR and BACE1. Interacts (via N-terminal VHS domain) with SORL1/sorLA and SORT1 (via C-terminal cytosolic domain). Binds the accessory proteins CCDC91, P200, SYNRG, EPN4 and NECAP2. Interacts with ADRA2B. Interacts (via VHS domain) with PIK4B; the interaction is important for PIK4B location at the Golgi apparatus membrane. Ubiquitinated. As to expression, ubiquitously expressed.

It is found in the golgi apparatus. The protein resides in the trans-Golgi network membrane. It localises to the endosome membrane. Its subcellular location is the early endosome membrane. Plays a role in protein sorting and trafficking between the trans-Golgi network (TGN) and endosomes. Mediates the ARF-dependent recruitment of clathrin to the TGN and binds ubiquitinated proteins and membrane cargo molecules with a cytosolic acidic cluster-dileucine (DXXLL) motif. Mediates export of the GPCR receptor ADRA2B to the cell surface. Regulates retrograde transport of phosphorylated form of BACE1 from endosomes to the trans-Golgi network. The chain is ADP-ribosylation factor-binding protein GGA2 (GGA2) from Homo sapiens (Human).